The following is a 152-amino-acid chain: MEIDKVFCDTIMYQDLEILQDYLDTFKLDPQLTLILKKYKHASPFWKSDEKSFWIFEGILHDEAERVKQLNGVKTRNKVGFIYIKQIFYDIVELLLEATNDKKASSIDSRCVVCYENEICIKIQPCNHFVVCKSCFNRLNTCPMCRSKINKS.

Residues 111–146 (CVVCYENEICIKIQPCNHFVVCKSCFNRLNTCPMCR) form an RING-type zinc finger.

This sequence belongs to the IIV-6 157L family.

The sequence is that of Putative RING finger protein 157L from Invertebrate iridescent virus 6 (IIV-6).